Here is a 417-residue protein sequence, read N- to C-terminus: Indole-3-pyruvate monooxygenase YUCCA6 (417 aa).

FAD is bound at residue 36–41 (GAGPSG). NADP(+) is bound at residue 204–209 (GCGNSG).

It belongs to the FMO family. FAD serves as cofactor. In terms of tissue distribution, highly expressed in roots but modestly expressed in the cauline leaves and flowers. Expressed in anthers.

Its subcellular location is the cytoplasm. It carries out the reaction indole-3-pyruvate + NADPH + O2 + H(+) = (indol-3-yl)acetate + CO2 + NADP(+) + H2O. Its pathway is plant hormone metabolism; auxin biosynthesis. Involved in auxin biosynthesis via the indole-3-pyruvic acid (IPA) pathway. Also able to convert in vitro phenyl pyruvate (PPA) to phenyl acetic acid (PAA). Required for the formation of floral organs and vascular tissues. Belongs to the set of redundant YUCCA genes probably responsible for auxin biosynthesis in shoots. The polypeptide is Indole-3-pyruvate monooxygenase YUCCA6 (YUC6) (Arabidopsis thaliana (Mouse-ear cress)).